The following is a 163-amino-acid chain: 2-C-methyl-D-erythritol 2,4-cyclodiphosphate synthase (163 aa).

A divalent metal cation-binding residues include Asp-15 and His-17. 4-CDP-2-C-methyl-D-erythritol 2-phosphate-binding positions include 15 to 17 (DFH) and 41 to 42 (HS). Residue His-49 participates in a divalent metal cation binding. 4-CDP-2-C-methyl-D-erythritol 2-phosphate-binding positions include 63-65 (DIG) and 139-142 (TTNE).

Belongs to the IspF family. Homotrimer. The cofactor is a divalent metal cation.

The catalysed reaction is 4-CDP-2-C-methyl-D-erythritol 2-phosphate = 2-C-methyl-D-erythritol 2,4-cyclic diphosphate + CMP. Its pathway is isoprenoid biosynthesis; isopentenyl diphosphate biosynthesis via DXP pathway; isopentenyl diphosphate from 1-deoxy-D-xylulose 5-phosphate: step 4/6. Involved in the biosynthesis of isopentenyl diphosphate (IPP) and dimethylallyl diphosphate (DMAPP), two major building blocks of isoprenoid compounds. Catalyzes the conversion of 4-diphosphocytidyl-2-C-methyl-D-erythritol 2-phosphate (CDP-ME2P) to 2-C-methyl-D-erythritol 2,4-cyclodiphosphate (ME-CPP) with a corresponding release of cytidine 5-monophosphate (CMP). The sequence is that of 2-C-methyl-D-erythritol 2,4-cyclodiphosphate synthase from Gloeobacter violaceus (strain ATCC 29082 / PCC 7421).